The sequence spans 629 residues: Ribosomal protein S6 kinase 2 beta (629 aa).

The 260-residue stretch at 62-321 (FVLLKVLGQG…AEELKRHPFF (260 aa)) folds into the Protein kinase 1 domain. ATP contacts are provided by residues 68-76 (LGQGSFGKV) and K94. The active-site Proton acceptor is D187. S221 is modified (phosphoserine). Residues 322 to 391 (STIDWNKLYR…VAPVLVEEDA (70 aa)) enclose the AGC-kinase C-terminal domain. T359 bears the Phosphothreonine mark. The residue at position 363 (S363) is a Phosphoserine. At S380 the chain carries Phosphoserine; by autocatalysis. The 214-residue stretch at 416–629 (YTVRETIGVG…PEEILARIGS (214 aa)) folds into the Protein kinase 2 domain. ATP is bound by residues 422–430 (IGVGSYSVC) and K445. Catalysis depends on D533, which acts as the Proton acceptor. The residue at position 571 (T571) is a Phosphothreonine.

The protein belongs to the protein kinase superfamily. AGC Ser/Thr protein kinase family. S6 kinase subfamily. Mg(2+) serves as cofactor. In terms of processing, autophosphorylated on Ser-380, as part of the activation process.

It catalyses the reaction L-seryl-[protein] + ATP = O-phospho-L-seryl-[protein] + ADP + H(+). The enzyme catalyses L-threonyl-[protein] + ATP = O-phospho-L-threonyl-[protein] + ADP + H(+). With respect to regulation, activated by multiple phosphorylations on threonine and serine residues. Serine/threonine kinase that may play a role in mediating the growth-factor and stress induced activation of transcription. This chain is Ribosomal protein S6 kinase 2 beta, found in Xenopus laevis (African clawed frog).